The following is a 425-amino-acid chain: MTMAKLTESMTNVLEGDSMDQDVESPVAIHQPKLPKQARDDLPRHISRDRTKRKIQRYVRKDGKCNVHHGNVRETYRYLTDIFTTLVDLKWRFNLLIFVMVYTVTWLFFGMIWWLIAYIRGDMDHIEDPSWTPCVTNLNGFVSAFLFSIETETTIGYGYRVITDKCPEGIILLLIQSVLGSIVNAFMVGCMFVKISQPKKRAETLVFSTHAVISMRDGKLCLMFRVGDLRNSHIVEASIRAKLIKSKQTSEGEFIPLNQSDINVGYYTGDDRLFLVSPLIISHEINQQSPFWEISKAQLPKEELEIVVILEGIVEATGMTCQARSSYITSEILWGYRFTPVLTMEDGFYEVDYNSFHETYETSTPSLSAKELAELANRAEVPLSWSVSSKLNQHAELETEEEEKNPEELTERNGDVANLENESKV.

Topologically, residues 1–91 (MTMAKLTESM…IFTTLVDLKW (91 aa)) are cytoplasmic. Phosphoserine occurs at positions 18 and 25. The helical transmembrane segment at 92–116 (RFNLLIFVMVYTVTWLFFGMIWWLI) threads the bilayer. Topologically, residues 117 to 140 (AYIRGDMDHIEDPSWTPCVTNLNG) are extracellular. Positions 141–152 (FVSAFLFSIETE) form an intramembrane region, helical; Pore-forming. Positions 153–159 (TTIGYGY) form an intramembrane region, pore-forming. Residues 154-159 (TIGYGY) carry the Selectivity filter motif. The Extracellular portion of the chain corresponds to 160 to 168 (RVITDKCPE). Residues 169–190 (GIILLLIQSVLGSIVNAFMVGC) traverse the membrane as a helical segment. At 191–425 (MFVKISQPKK…VANLENESKV (235 aa)) the chain is on the cytoplasmic side. The tract at residues 392-425 (NQHAELETEEEEKNPEELTERNGDVANLENESKV) is disordered. A PDZ-binding motif is present at residues 422 to 425 (ESKV).

It belongs to the inward rectifier-type potassium channel (TC 1.A.2.1) family. KCNJ6 subfamily. In terms of assembly, associates with KCNJ3/GIRK1to form a G-protein-activated heteromultimer pore-forming unit. Associates with KCNJ5/GRIK4 to form a G-protein-activated heteromultimer pore-forming unit. The resulting inward current is much larger. Interacts (via PDZ-binding motif) with SNX27 (via PDZ domain); the interaction is required when endocytosed to prevent degradation in lysosomes and promote recycling to the plasma membrane. Associates with KCNJ3/GRIK1 to form a G-protein-activated heteromultimer pore-forming unit. As to quaternary structure, associates with KCNJ3/GRIK1 to form a G-protein-activated heteromultimer pore-forming unit. The resulting inward current is much larger. As to expression, expressed in the brain.

The protein localises to the membrane. It catalyses the reaction K(+)(in) = K(+)(out). Activated by phosphatidylinositol 4,5 biphosphate (PtdIns(4,5)P2). Inward rectifier potassium channels are characterized by a greater tendency to allow potassium to flow into the cell rather than out of it. Their voltage dependence is regulated by the concentration of extracellular potassium; as external potassium is raised, the voltage range of the channel opening shifts to more positive voltages. The inward rectification is mainly due to the blockage of outward current by internal magnesium. This potassium channel is controlled by G proteins. Forms a functional channel in association with KCNJ3/GIRK1. Functionally, inward rectifier potassium channels are characterized by a greater tendency to allow potassium to flow into the cell rather than out of it. Their voltage dependence is regulated by the concentration of extracellular potassium; as external potassium is raised, the voltage range of the channel opening shifts to more positive voltages. The inward rectification is mainly due to the blockage of outward current by internal magnesium. This potassium channel is controlled by G proteins. The protein is G protein-activated inward rectifier potassium channel 2 (Kcnj6) of Mus musculus (Mouse).